The primary structure comprises 709 residues: Polyribonucleotide nucleotidyltransferase (709 aa).

Mg(2+)-binding residues include Asp487 and Asp493. The KH domain occupies 554-613 (PRIHTMKISSDKIKDVIGKGGAVIRALCEETGTTIEIEDDGTIKIAATEGAAAKEAIRRI). Residues 623–691 (GKIYPGKVMR…RQGRIRLSIK (69 aa)) form the S1 motif domain.

The protein belongs to the polyribonucleotide nucleotidyltransferase family. As to quaternary structure, component of the RNA degradosome, which is a multiprotein complex involved in RNA processing and mRNA degradation. It depends on Mg(2+) as a cofactor.

It is found in the cytoplasm. It carries out the reaction RNA(n+1) + phosphate = RNA(n) + a ribonucleoside 5'-diphosphate. Functionally, involved in mRNA degradation. Catalyzes the phosphorolysis of single-stranded polyribonucleotides processively in the 3'- to 5'-direction. This chain is Polyribonucleotide nucleotidyltransferase, found in Aliivibrio salmonicida (strain LFI1238) (Vibrio salmonicida (strain LFI1238)).